A 461-amino-acid polypeptide reads, in one-letter code: Bifunctional protein GlmU (461 aa).

The pyrophosphorylase stretch occupies residues 1–235; it reads MTDTRKQRAA…EDDLIGCDSK (235 aa). UDP-N-acetyl-alpha-D-glucosamine-binding positions include 13–16, K27, Q80, 85–86, 108–110, G146, E161, and N176; these read LAAG, GT, and YGD. D110 is a Mg(2+) binding site. A linker region spans residues 236–256; the sequence is ADLAEAEAIFQQKRRRALMEA. The N-acetyltransferase stretch occupies residues 257–461; the sequence is GVTMVAPETV…ARTTDQNKKG (205 aa). UDP-N-acetyl-alpha-D-glucosamine-binding residues include R322 and K340. H352 (proton acceptor) is an active-site residue. The UDP-N-acetyl-alpha-D-glucosamine site is built by Y355 and N366. Acetyl-CoA is bound by residues A369, 375-376, S394, S412, and R429; that span reads NY.

It in the N-terminal section; belongs to the N-acetylglucosamine-1-phosphate uridyltransferase family. This sequence in the C-terminal section; belongs to the transferase hexapeptide repeat family. Homotrimer. The cofactor is Mg(2+).

It localises to the cytoplasm. It catalyses the reaction alpha-D-glucosamine 1-phosphate + acetyl-CoA = N-acetyl-alpha-D-glucosamine 1-phosphate + CoA + H(+). The catalysed reaction is N-acetyl-alpha-D-glucosamine 1-phosphate + UTP + H(+) = UDP-N-acetyl-alpha-D-glucosamine + diphosphate. The protein operates within nucleotide-sugar biosynthesis; UDP-N-acetyl-alpha-D-glucosamine biosynthesis; N-acetyl-alpha-D-glucosamine 1-phosphate from alpha-D-glucosamine 6-phosphate (route II): step 2/2. It functions in the pathway nucleotide-sugar biosynthesis; UDP-N-acetyl-alpha-D-glucosamine biosynthesis; UDP-N-acetyl-alpha-D-glucosamine from N-acetyl-alpha-D-glucosamine 1-phosphate: step 1/1. Its pathway is bacterial outer membrane biogenesis; LPS lipid A biosynthesis. Its function is as follows. Catalyzes the last two sequential reactions in the de novo biosynthetic pathway for UDP-N-acetylglucosamine (UDP-GlcNAc). The C-terminal domain catalyzes the transfer of acetyl group from acetyl coenzyme A to glucosamine-1-phosphate (GlcN-1-P) to produce N-acetylglucosamine-1-phosphate (GlcNAc-1-P), which is converted into UDP-GlcNAc by the transfer of uridine 5-monophosphate (from uridine 5-triphosphate), a reaction catalyzed by the N-terminal domain. This chain is Bifunctional protein GlmU, found in Hyphomonas neptunium (strain ATCC 15444).